The chain runs to 330 residues: Glycerol-3-phosphate dehydrogenase [NAD(P)+] (330 aa).

NADPH-binding residues include Ser-11, Phe-12, Arg-32, and Lys-106. 3 residues coordinate sn-glycerol 3-phosphate: Lys-106, Gly-133, and Ser-135. Residue Ala-137 participates in NADPH binding. Residues Lys-188, Asp-241, Ser-251, Arg-252, and Asn-253 each contribute to the sn-glycerol 3-phosphate site. Catalysis depends on Lys-188, which acts as the Proton acceptor. Arg-252 serves as a coordination point for NADPH. The NADPH site is built by Val-276 and Glu-278.

This sequence belongs to the NAD-dependent glycerol-3-phosphate dehydrogenase family.

It localises to the cytoplasm. The enzyme catalyses sn-glycerol 3-phosphate + NAD(+) = dihydroxyacetone phosphate + NADH + H(+). The catalysed reaction is sn-glycerol 3-phosphate + NADP(+) = dihydroxyacetone phosphate + NADPH + H(+). Its pathway is membrane lipid metabolism; glycerophospholipid metabolism. Its function is as follows. Catalyzes the reduction of the glycolytic intermediate dihydroxyacetone phosphate (DHAP) to sn-glycerol 3-phosphate (G3P), the key precursor for phospholipid synthesis. The polypeptide is Glycerol-3-phosphate dehydrogenase [NAD(P)+] (Clostridium botulinum (strain Alaska E43 / Type E3)).